We begin with the raw amino-acid sequence, 285 residues long: Formate channel FocA (285 aa).

The Cytoplasmic segment spans residues 1–30 (MKADNPFDLLLPAAMAKVAEEAGVYKATKH). Residues 31 to 56 (PLKTFYLAITAGVFISIAFVFYITAT) form a helical membrane-spanning segment. At 57 to 64 (TGTGTMPF) the chain is on the periplasmic side. Residues 65–85 (GMAKLVGGICFSLGLILCVVC) traverse the membrane as a helical segment. The Cytoplasmic segment spans residues 86–112 (GADLFTSTVLIVVAKASGRITWGQLAK). The chain crosses the membrane as a helical span at residues 113-135 (NWLNVYFGNLVGALLFVLLMWLS). The Periplasmic portion of the chain corresponds to 136 to 160 (GEYMTANGQWGLNVLQTADHKVHHT). A helical membrane pass occupies residues 161-181 (FIEAVCLGILANLMVCLAVWM). The Cytoplasmic segment spans residues 182 to 187 (SYSGRS). A helical membrane pass occupies residues 188–205 (LMDKAFIMVLPVAMFVAS). The Periplasmic segment spans residues 206–249 (GFEHSIANMFMIPMGIVIRDFASPEFWTAVGSAPENFSHLTVMN). Residues 250 to 276 (FITDNLIPVTIGNIIGGGLLVGLTYWV) form a helical membrane-spanning segment. The Cytoplasmic segment spans residues 277–285 (IYLRENDHH).

The protein belongs to the FNT transporter (TC 1.A.16) family. Homopentamer.

It localises to the cell inner membrane. It carries out the reaction formate(in) = formate(out). Its function is as follows. Involved in the bidirectional transport of formate during mixed-acid fermentation. Functions to maintain relatively constant intracellular formate levels during growth, using different mechanisms for efflux and uptake of the anion. Is impermeable to water. In Escherichia coli O157:H7, this protein is Formate channel FocA.